Consider the following 272-residue polypeptide: Acetyl-coenzyme A carboxylase carboxyl transferase subunit alpha (272 aa).

A CoA carboxyltransferase C-terminal domain is found at 1–248 (MDKDFMKINV…KKTIVDSLLE (248 aa)).

It belongs to the AccA family. In terms of assembly, acetyl-CoA carboxylase is a heterohexamer composed of biotin carboxyl carrier protein (AccB), biotin carboxylase (AccC) and two subunits each of ACCase subunit alpha (AccA) and ACCase subunit beta (AccD).

It localises to the cytoplasm. The enzyme catalyses N(6)-carboxybiotinyl-L-lysyl-[protein] + acetyl-CoA = N(6)-biotinyl-L-lysyl-[protein] + malonyl-CoA. It participates in lipid metabolism; malonyl-CoA biosynthesis; malonyl-CoA from acetyl-CoA: step 1/1. Its function is as follows. Component of the acetyl coenzyme A carboxylase (ACC) complex. First, biotin carboxylase catalyzes the carboxylation of biotin on its carrier protein (BCCP) and then the CO(2) group is transferred by the carboxyltransferase to acetyl-CoA to form malonyl-CoA. The sequence is that of Acetyl-coenzyme A carboxylase carboxyl transferase subunit alpha from Clostridium beijerinckii (strain ATCC 51743 / NCIMB 8052) (Clostridium acetobutylicum).